A 542-amino-acid chain; its full sequence is Protein phosphatase 1G (542 aa).

Residue glycine 2 is the site of N-myristoyl glycine attachment. Position 22 is an omega-N-methylarginine (arginine 22). The 477-residue stretch at 26–502 (PYGFSAMQGW…DNMTCIIICF (477 aa)) folds into the PPM-type phosphatase domain. Mn(2+) contacts are provided by aspartate 60 and glycine 61. 2 disordered regions span residues 117–136 (IAGRPTEDEDDKDKVADEDD) and 164–325 (CQKV…SDSG). Threonine 122 is modified (phosphothreonine). Acidic residues-rich tracts occupy residues 123–136 (EDEDDKDKVADEDD) and 259–309 (DSED…DEEM). An N6-acetyllysine modification is found at lysine 380. Mn(2+)-binding residues include aspartate 438 and aspartate 493. The segment at 513 to 542 (ESGKRKLEEALSTEGAEDTGNSDKKKAKRD) is disordered. Serine 524 bears the Phosphoserine mark.

Belongs to the PP2C family. As to quaternary structure, interacts with NOL3; may dephosphorylate NOL3. Mg(2+) serves as cofactor. Requires Mn(2+) as cofactor. In terms of tissue distribution, highly expressed in testis. Low level of expression in kidney. Also expressed in a number of tissues undergoing proliferation including embryo, uterus at pregnancy, placenta, and ovaries.

Its subcellular location is the nucleus. It localises to the membrane. The catalysed reaction is O-phospho-L-seryl-[protein] + H2O = L-seryl-[protein] + phosphate. The enzyme catalyses O-phospho-L-threonyl-[protein] + H2O = L-threonyl-[protein] + phosphate. Functionally, may be involved in regulation of cell cycle. This Mus musculus (Mouse) protein is Protein phosphatase 1G (Ppm1g).